Consider the following 606-residue polypeptide: Gastrula zinc finger protein XlCGF66.1 (606 aa).

Disordered regions lie at residues 1 to 31 (MGMW…RGKK) and 240 to 271 (TLHS…KRQK). Over residues 242-262 (HSKDSCNEGHKHLSHKSDYNK) the composition is skewed to basic and acidic residues. 11 consecutive C2H2-type zinc fingers follow at residues 273 to 295 (FSCS…QKTH), 300 to 322 (LLCL…RQTH), 328 to 350 (FSCS…QITH), 384 to 407 (DFCS…QQVH), 413 to 435 (FSCT…QRTH), 441 to 464 (YSCS…QQVH), 470 to 492 (FFCS…QRTH), 498 to 521 (YSCS…QQVH), 527 to 549 (FSCS…QRTH), 555 to 578 (DFCF…QQVH), and 584 to 606 (FSCS…HRTH).

The protein belongs to the krueppel C2H2-type zinc-finger protein family.

It localises to the nucleus. In terms of biological role, may be involved in transcriptional regulation. This chain is Gastrula zinc finger protein XlCGF66.1, found in Xenopus laevis (African clawed frog).